The chain runs to 277 residues: MGIRRYKPTTPGRRGSSVADFVEITRDHPEKSLVRPLHSKGGRNVHGRITTRHQGGGHKRAYRIIDFRRDKDGVPAKVAHIEYDPNRTARIALLHYVDGEKRYILAPVKLHQGDMVSSGVGADIKPGNALPLRNIPTGTVVHAIELRPGGGAKIARSAGASVQLVAKDGPYAQLRMPSGEIRNVDVRCRATVGEVGNAEQSNINWGKAGRMRWKGRRPTVRGVAMNPVDHPHGGGEGKTSGGRHPVNPKGRPEGRTRRTKKSSDALIVRRRKQNRRR.

2 disordered regions span residues 37–58 (LHSK…GGGH) and 222–277 (GVAM…NRRR). Over residues 268-277 (VRRRKQNRRR) the composition is skewed to basic residues.

Belongs to the universal ribosomal protein uL2 family. Part of the 50S ribosomal subunit. Forms a bridge to the 30S subunit in the 70S ribosome.

In terms of biological role, one of the primary rRNA binding proteins. Required for association of the 30S and 50S subunits to form the 70S ribosome, for tRNA binding and peptide bond formation. It has been suggested to have peptidyltransferase activity; this is somewhat controversial. Makes several contacts with the 16S rRNA in the 70S ribosome. The sequence is that of Large ribosomal subunit protein uL2 from Parafrankia sp. (strain EAN1pec).